A 98-amino-acid polypeptide reads, in one-letter code: Prolactin-releasing peptide (98 aa).

Positions 1 to 22 are cleaved as a signal peptide; sequence MKAVGAWLLCLLLLGLALQGAA. Phe53 is modified (phenylalanine amide). Residues 58–98 constitute a propeptide that is removed on maturation; it reads AAPGDGPRPGPRRELACIPLEGGAEPSRALLGRLTAQLVQE.

In terms of tissue distribution, more abundantly expressed in the brainstem than the hypothalamus.

The protein resides in the secreted. Stimulates prolactin (PRL) release and regulates the expression of prolactin through its receptor GPR10. May stimulate lactotrophs directly to secrete PRL. This chain is Prolactin-releasing peptide (PRLH), found in Ovis aries (Sheep).